A 40-amino-acid chain; its full sequence is Photosystem II reaction center protein J (40 aa).

Residues 8 to 28 traverse the membrane as a helical segment; the sequence is IPLWLIGTVAGILIIGLLGVF.

It belongs to the PsbJ family. PSII is composed of 1 copy each of membrane proteins PsbA, PsbB, PsbC, PsbD, PsbE, PsbF, PsbH, PsbI, PsbJ, PsbK, PsbL, PsbM, PsbT, PsbX, PsbY, PsbZ, Psb30/Ycf12, at least 3 peripheral proteins of the oxygen-evolving complex and a large number of cofactors. It forms dimeric complexes.

It is found in the plastid. The protein localises to the chloroplast thylakoid membrane. Functionally, one of the components of the core complex of photosystem II (PSII). PSII is a light-driven water:plastoquinone oxidoreductase that uses light energy to abstract electrons from H(2)O, generating O(2) and a proton gradient subsequently used for ATP formation. It consists of a core antenna complex that captures photons, and an electron transfer chain that converts photonic excitation into a charge separation. This is Photosystem II reaction center protein J from Nandina domestica (Heavenly bamboo).